The primary structure comprises 354 residues: Cyclin-D1-2 (354 aa).

Disordered regions lie at residues 37-74 (FFQQ…EEEE) and 331-354 (TTAT…RRKM). Low complexity-rich tracts occupy residues 44–66 (PAPA…AGSC) and 331–346 (TTAT…VSSS).

It belongs to the cyclin family. Cyclin D subfamily.

This is Cyclin-D1-2 (CYCD1-2) from Oryza sativa subsp. japonica (Rice).